Here is a 292-residue protein sequence, read N- to C-terminus: 4-hydroxy-tetrahydrodipicolinate synthase (292 aa).

Thr-45 contacts pyruvate. The active-site Proton donor/acceptor is the Tyr-133. The active-site Schiff-base intermediate with substrate is Lys-162. Ile-204 provides a ligand contact to pyruvate.

This sequence belongs to the DapA family. As to quaternary structure, homotetramer; dimer of dimers.

Its subcellular location is the cytoplasm. It catalyses the reaction L-aspartate 4-semialdehyde + pyruvate = (2S,4S)-4-hydroxy-2,3,4,5-tetrahydrodipicolinate + H2O + H(+). The protein operates within amino-acid biosynthesis; L-lysine biosynthesis via DAP pathway; (S)-tetrahydrodipicolinate from L-aspartate: step 3/4. Functionally, catalyzes the condensation of (S)-aspartate-beta-semialdehyde [(S)-ASA] and pyruvate to 4-hydroxy-tetrahydrodipicolinate (HTPA). This chain is 4-hydroxy-tetrahydrodipicolinate synthase, found in Nitratidesulfovibrio vulgaris (strain DSM 19637 / Miyazaki F) (Desulfovibrio vulgaris).